The primary structure comprises 860 residues: Leucine--tRNA ligase (860 aa).

The short motif at 42 to 52 (PYPSGRLHMGH) is the 'HIGH' region element. The 'KMSKS' region motif lies at 619-623 (KMSKS). Lys-622 contacts ATP.

This sequence belongs to the class-I aminoacyl-tRNA synthetase family.

It localises to the cytoplasm. It carries out the reaction tRNA(Leu) + L-leucine + ATP = L-leucyl-tRNA(Leu) + AMP + diphosphate. In Edwardsiella ictaluri (strain 93-146), this protein is Leucine--tRNA ligase.